A 23-amino-acid polypeptide reads, in one-letter code: SV40 early leader protein (23 aa).

Residues 1-23 (MQRPRPPRPLSYSRSSEEAFLEA) form a disordered region.

It belongs to the polyomavirus early leader protein family.

Its function is as follows. May play a role in the lytic cycle. In Macaca (macaques), this protein is SV40 early leader protein.